Reading from the N-terminus, the 596-residue chain is MTDLTAQDAAWSTRDHLDDPVIGELRNRFGPDAFTVQATRTGIPVVWVKREQLLEVGDFLKKLPKPYVMLFDLHGMDERLRTHRDGLPAADFSVFYHLISIERNRDIMLKVALSENDLRVPTFTKLFPNANWYERETWEMFGIDIEGHPHLTRIMMPQTWEGHPLRKDYPARATEFDPFELTKAKQDLEMEALTFKPEDWGMKRGTDNEDFMFLNLGPNHPSAHGAFRIILQLDGEEIVDCVPDIGYHHRGAEKMGERQSWHSYIPYTDRIEYLGGCVNEMPYVLAVEKLAGITVSDRVNVIRVMLSELFRINSHLLYISTFIQDVGAMTPVFFAFTDRQKIYDLVEAITGFRMHPAWFRIGGVAHDLPRGWDRLLREFLEWMPKRLDSYEKAALRNTILKGRSQGVAAYGAKEALEWGTTGAGLRATGIDFDVRKWRPYSGYENFDFEVPVGGGVSDCYTRVMLKVEELRQSLRILQQCLDNMPEGPFKADHPLTTPPPKERTLQHIETLITHFLQVSWGPVMPAQESFQMVEATKGINSYYLTSDGSTMSYRTRVRTPSFAHLQQIPSAIRGSLVSDLIVYLGSIDFVMSDVDR.

Residues 1–186 (MTDLTAQDAA…DPFELTKAKQ (186 aa)) form an NADH dehydrogenase I subunit C region. The tract at residues 210-596 (DFMFLNLGPN…IDFVMSDVDR (387 aa)) is NADH dehydrogenase I subunit D.

In the N-terminal section; belongs to the complex I 30 kDa subunit family. It in the C-terminal section; belongs to the complex I 49 kDa subunit family. As to quaternary structure, NDH-1 is composed of 13 different subunits. Subunits NuoB, CD, E, F, and G constitute the peripheral sector of the complex.

The protein resides in the cell inner membrane. The catalysed reaction is a quinone + NADH + 5 H(+)(in) = a quinol + NAD(+) + 4 H(+)(out). In terms of biological role, NDH-1 shuttles electrons from NADH, via FMN and iron-sulfur (Fe-S) centers, to quinones in the respiratory chain. The immediate electron acceptor for the enzyme in this species is believed to be ubiquinone. Couples the redox reaction to proton translocation (for every two electrons transferred, four hydrogen ions are translocated across the cytoplasmic membrane), and thus conserves the redox energy in a proton gradient. The protein is NADH-quinone oxidoreductase subunit C/D of Salmonella choleraesuis (strain SC-B67).